The primary structure comprises 103 residues: Putative septation protein SpoVG (103 aa).

It belongs to the SpoVG family.

Could be involved in septation. This is Putative septation protein SpoVG from Exiguobacterium sibiricum (strain DSM 17290 / CCUG 55495 / CIP 109462 / JCM 13490 / 255-15).